The primary structure comprises 441 residues: Ribosomal protein uS12 methylthiotransferase RimO (441 aa).

The region spanning 6–116 (PKVGFVSLGC…VMTAVHANLP (111 aa)) is the MTTase N-terminal domain. Positions 15, 51, 80, 147, 151, and 154 each coordinate [4Fe-4S] cluster. One can recognise a Radical SAM core domain in the interval 133–370 (LTPQHYAYLK…MEVQESISAE (238 aa)). Residues 373-439 (RRKIGRIETV…GHDLWAAPPA (67 aa)) enclose the TRAM domain.

This sequence belongs to the methylthiotransferase family. RimO subfamily. The cofactor is [4Fe-4S] cluster.

The protein localises to the cytoplasm. The enzyme catalyses L-aspartate(89)-[ribosomal protein uS12]-hydrogen + (sulfur carrier)-SH + AH2 + 2 S-adenosyl-L-methionine = 3-methylsulfanyl-L-aspartate(89)-[ribosomal protein uS12]-hydrogen + (sulfur carrier)-H + 5'-deoxyadenosine + L-methionine + A + S-adenosyl-L-homocysteine + 2 H(+). Its function is as follows. Catalyzes the methylthiolation of an aspartic acid residue of ribosomal protein uS12. The sequence is that of Ribosomal protein uS12 methylthiotransferase RimO from Methylobacillus flagellatus (strain ATCC 51484 / DSM 6875 / VKM B-1610 / KT).